Reading from the N-terminus, the 2599-residue chain is Non-reducing polyketide synthase azaA (2599 aa).

The segment at 95–231 is N-terminal acylcarrier protein transacylase domain (SAT); the sequence is PNILLSPMVV…AARSISSLQQ (137 aa). Cys-132 (nucleophile; for transacylase activity) is an active-site residue. His-250 (proton donor/acceptor; for transacylase activity) is an active-site residue. Residues 372–790 enclose the Ketosynthase family 3 (KS3) domain; that stretch reads PNEIAVIGMS…GSNASMVVAQ (419 aa). Catalysis depends on for beta-ketoacyl synthase activity residues Cys-539, His-674, and His-713. The tract at residues 902–1193 is malonyl-CoA:ACP transacylase (MAT) domain; the sequence is FGGQISNYVG…ITSMASRALG (292 aa). The tract at residues 1282-1413 is N-terminal hotdog fold; sequence PKTLWSLIEA…GKLAFLSGQD (132 aa). One can recognise a PKS/mFAS DH domain in the interval 1282-1591; sequence PKTLWSLIEA…YHKVAKASMS (310 aa). Residues 1310–1589 form a product template (PT) domain region; the sequence is LVSGHVIANT…INYHKVAKAS (280 aa). The active-site Proton acceptor; for dehydratase activity is the His-1314. The C-terminal hotdog fold stretch occupies residues 1443–1591; it reads ADDIIQGRNI…YHKVAKASMS (149 aa). Catalysis depends on Asp-1499, which acts as the Proton donor; for dehydratase activity. Residues 1601 to 1652 are disordered; sequence EAAPSSSTRAHPTSSSSPRLPGPFVPEDKSQNETQTAGTNAVAKKKSEKSAQ. Low complexity predominate over residues 1602–1619; the sequence is AAPSSSTRAHPTSSSSPR. One can recognise a Carrier domain in the interval 1653 to 1727; the sequence is QNVLDKTRAL…GLVEYVQSAV (75 aa). Ser-1687 is modified (O-(pantetheine 4'-phosphoryl)serine). The segment at 1749 to 1779 is disordered; that stretch reads NLAASPSSSSSSTNLTEDSSLDPTETTTNIS. Positions 1750-1766 are enriched in low complexity; it reads LAASPSSSSSSTNLTED. The segment covering 1769 to 1779 has biased composition (polar residues); the sequence is LDPTETTTNIS. The interval 1952-2140 is methyltransferase domain; that stretch reads DSLLNKLSYR…VGYGQVDWTD (189 aa). An NADPH-binding (R) domain region spans residues 2222 to 2467; sequence ITGATGSLGV…LCWTPVNDVA (246 aa).

It depends on pantetheine 4'-phosphate as a cofactor.

It participates in secondary metabolite biosynthesis. In terms of biological role, non-reducing polyketide synthase; part of the gene cluster that mediates the biosynthesis of azaphilones, a class of fungal metabolites characterized by a highly oxygenated pyrano-quinone bicyclic core and exhibiting a broad range of bioactivities. In the first step, the non-reducing polyketide synthase azaA forms the hexaketide precursor from successive condensations of five malonyl-CoA units, presumably with a simple acetyl-CoA starter unit. The reactive polyketide chain then undergoes a PT-mediated C2-C7 cyclization to afford the aromatic ring and is eventually released as an aldehyde through the R-domain. The putative ketoreductase azaE is proposed to catalyze the reduction of the terminal ketone resulting in the early culture product FK17-P2a. The monooxygenase azaH was demonstrated to be the only enzyme required to convert FK17-P2a to azanigerone E. AzaH first hydroxylates the benzaldehyde intermediate FK17-P2a at C4, which triggers the formation of the pyran-ring to afford azanigerone E. In parallel, the 2,4-dimethylhexanoyl chain is synthesized by the HR-PKS azaB and is proposed to be transferred to the C4-hydroxyl of azanigerone E by the acyltransferase azaD directly from the ACP domain of azaB. Alternatively, the 2,4-dimethyl-hexanoyl chain may be offloaded from the HR-PKS as a carboxylic acid and converted to an acyl-CoA by azaF. The resulting acyl-CoA molecule could then be taken up as a substrate by AzaD to form azanigerone B. To yield the carboxylic acid substituent in azanigerone A, the hydroxypropyl side chain of azanigerone B would need to undergo a C-C oxidative cleavage catalyzed by cytochrome P450 AzaI. AzaI is proposed to act on a vicinal diol that leads to a C-C bond scission either through an alkoxyradical intermediate or a peroxy complex. In the biosynthesis of azanigerone A, azanigerone B first undergoes hydroxylation at C10, possibly catalyzed by one of the two FAD-dependent monooxygenases encoded in the cluster, azaG or azaL, resulting in the vicinal diol azanigerone C. Oxidative cleavage of azanigerone C by azaI would yield the corresponding aldehyde derivative of azanigerone A. Finally, the dehydrogenase azaJ is proposed to convert the aldehyde functional group into the carboxylic acid, completing the conversion from azanigerone B to azanigerone A. Alternatively, the oxidation of aldehyde to carboxylic acid may be catalyzed by the same P450 enzyme azaI via consecutive oxidation or by endogenous alcohol dehydrogenase. This Aspergillus niger (strain ATCC 1015 / CBS 113.46 / FGSC A1144 / LSHB Ac4 / NCTC 3858a / NRRL 328 / USDA 3528.7) protein is Non-reducing polyketide synthase azaA.